A 310-amino-acid chain; its full sequence is Olfactory receptor 4C11 (310 aa).

Over 1–23 (MQQNNSVPEFILLGLTQDPLRQK) the chain is Extracellular. N-linked (GlcNAc...) asparagine glycosylation occurs at N4. A helical membrane pass occupies residues 24–47 (IVFVIFLIFYMGTVVGNMLIIVTI). At 48-55 (KSSRTLGS) the chain is on the cytoplasmic side. Residues 56–77 (PMYFFLFYLSFADSCFSTSTAP) traverse the membrane as a helical segment. Residues 78–98 (RLIVDALSEKKIITYNECMTQ) are Extracellular-facing. A disulfide bridge links C95 with C187. A helical membrane pass occupies residues 99-118 (VFALHLFGCMEIFVLILMAV). The Cytoplasmic portion of the chain corresponds to 119-137 (DRYVAICKPLRYPTIMSQQ). The chain crosses the membrane as a helical span at residues 138–156 (VCIILIVLAWIGSLIHSTA). Topologically, residues 157-193 (QIILALRLPFCGPYLIDHYCCDLQPLLKLACMDTYMI) are extracellular. A helical membrane pass occupies residues 194-217 (NLLLVSNSGAICSSSFMILIISYI). Residues 218-233 (VILHSLRNHSAKGKKK) are Cytoplasmic-facing. A helical membrane pass occupies residues 234–256 (ALSACTSHIIVVILFFGPCIFIY). Residues 257–267 (TRPPTTFPMDK) are Extracellular-facing. Residues 268–287 (MVAVFYTIGTPFLNPLIYTL) form a helical membrane-spanning segment. Topologically, residues 288-310 (RNAEVKNAMRKLWHGKIISENKG) are cytoplasmic.

The protein belongs to the G-protein coupled receptor 1 family.

Its subcellular location is the cell membrane. Its function is as follows. Odorant receptor. This is Olfactory receptor 4C11 (OR4C11) from Homo sapiens (Human).